We begin with the raw amino-acid sequence, 492 residues long: 2-succinylbenzoate--CoA ligase (492 aa).

Belongs to the ATP-dependent AMP-binding enzyme family. MenE subfamily.

The catalysed reaction is 2-succinylbenzoate + ATP + CoA = 2-succinylbenzoyl-CoA + AMP + diphosphate. Its pathway is quinol/quinone metabolism; 1,4-dihydroxy-2-naphthoate biosynthesis; 1,4-dihydroxy-2-naphthoate from chorismate: step 5/7. It participates in quinol/quinone metabolism; menaquinone biosynthesis. Its function is as follows. Converts 2-succinylbenzoate (OSB) to 2-succinylbenzoyl-CoA (OSB-CoA). The chain is 2-succinylbenzoate--CoA ligase from Staphylococcus aureus (strain MSSA476).